The primary structure comprises 565 residues: MSEALERLIDQGVGREPADIVLKGGRFFDLVTGELVASDIAISGERIVGTCGDYEGREEIDVTGRIVVPGFIDTHLHIESSLVTPHEFDRCVLPLGITTVVCDPHEIANVLGTEGIQYFLDSAMETVMDIRVQLSSCVPATHLETSGADLPVGRLTPFRHHPKVIGLAEFMNFPGVVNKDPVCLAKLDAFQDGHIDGHAPLLRGKELNGYLAAGIRTDHECTSAEEALEKIRKGMHILVREGSVSKDLQALMPILTERLSPYLALCTDDRNPLDIAEQGHLDNMIRTAISAGVEPLAIYRAASISAARAFGLRDRGLVAPGWRADLVIVDSLENCKAELVLSAGRRVTDALFAGRKPVEPVGLDSVKAREVKAADFGLPYNEGETSVLGVLPGKIITEHRRYRLPAEGNRTGVDLDRDIIKVAVIERHGVNGNHANGFVQGFGLKKGAIASTVGHDSHNICVVGVNDDDMALAVNRLGEIKGGFVVVHDGKVTGEIALPVAGLMSLEPYERVRDTLHHLRQAAFALGATLEEPFLQLAFLPLPVIPHLKISDRGLVDVDRFMLIG.

This sequence belongs to the metallo-dependent hydrolases superfamily. Adenine deaminase family. Mn(2+) serves as cofactor.

The enzyme catalyses adenine + H2O + H(+) = hypoxanthine + NH4(+). The sequence is that of Adenine deaminase 1 from Rhizobium meliloti (strain 1021) (Ensifer meliloti).